A 382-amino-acid polypeptide reads, in one-letter code: Chaperone protein DnaJ (382 aa).

The J domain occupies 5 to 70 (DYYEVLGLKK…QKRAAYDQYG (66 aa)). The CR-type zinc-finger motif lies at 134 to 212 (GTTKDIQINT…CHGEGRVHKK (79 aa)). Positions 147, 150, 164, 167, 186, 189, 200, and 203 each coordinate Zn(2+). CXXCXGXG motif repeat units follow at residues 147-154 (CDSCGGSG), 164-171 (CPHCHGSG), 186-193 (CPSCHGSG), and 200-207 (CRSCHGEG).

It belongs to the DnaJ family. As to quaternary structure, homodimer. It depends on Zn(2+) as a cofactor.

It is found in the cytoplasm. Functionally, participates actively in the response to hyperosmotic and heat shock by preventing the aggregation of stress-denatured proteins and by disaggregating proteins, also in an autonomous, DnaK-independent fashion. Unfolded proteins bind initially to DnaJ; upon interaction with the DnaJ-bound protein, DnaK hydrolyzes its bound ATP, resulting in the formation of a stable complex. GrpE releases ADP from DnaK; ATP binding to DnaK triggers the release of the substrate protein, thus completing the reaction cycle. Several rounds of ATP-dependent interactions between DnaJ, DnaK and GrpE are required for fully efficient folding. Also involved, together with DnaK and GrpE, in the DNA replication of plasmids through activation of initiation proteins. This chain is Chaperone protein DnaJ, found in Haemophilus influenzae (strain PittGG).